A 427-amino-acid chain; its full sequence is Serine hydroxymethyltransferase (427 aa).

Residues leucine 124 and 128–130 (GHL) each bind (6S)-5,6,7,8-tetrahydrofolate. At lysine 233 the chain carries N6-(pyridoxal phosphate)lysine.

This sequence belongs to the SHMT family. As to quaternary structure, homodimer. Requires pyridoxal 5'-phosphate as cofactor.

The protein resides in the cytoplasm. It carries out the reaction (6R)-5,10-methylene-5,6,7,8-tetrahydrofolate + glycine + H2O = (6S)-5,6,7,8-tetrahydrofolate + L-serine. It participates in one-carbon metabolism; tetrahydrofolate interconversion. The protein operates within amino-acid biosynthesis; glycine biosynthesis; glycine from L-serine: step 1/1. In terms of biological role, catalyzes the reversible interconversion of serine and glycine with tetrahydrofolate (THF) serving as the one-carbon carrier. This reaction serves as the major source of one-carbon groups required for the biosynthesis of purines, thymidylate, methionine, and other important biomolecules. Also exhibits THF-independent aldolase activity toward beta-hydroxyamino acids, producing glycine and aldehydes, via a retro-aldol mechanism. The chain is Serine hydroxymethyltransferase from Paracoccus denitrificans (strain Pd 1222).